Consider the following 353-residue polypeptide: Protein CYTOKININ-RESPONSIVE GATA TRANSCRIPTION FACTOR 1 (353 aa).

The short motif at 137–144 (IRKGAATD) is the Nuclear localization signal 1 element. A disordered region spans residues 142 to 166 (ATDPEGGAVRKPRRRAQAHQDESQQ). The GATA-type zinc-finger motif lies at 178–203 (CSDCNTTKTPLWRSGPCGPKSLCNAC). The Nuclear localization signal 2 signature appears at 244–251 (EKRAADVD).

Belongs to the type IV zinc-finger family. Class B subfamily. As to expression, mostly expressed in leaves and stems, and, at low levels, in roots.

The protein localises to the nucleus. Transcriptional regulator that specifically binds 5'-GATA-3' or 5'-GAT-3' motifs within gene promoters. Influences the expression of nuclear encoded chloroplast-targeted genes. Regulates chloroplast development and promotes chlorophyll accumulation. Modulates plant architecture (e.g. height, length and width of leaf blades, and flowering tillers production) and represses tillering, probably by modulating number of cells. Promotes senescence. Involved in grain filling, panicle development and starch production. The chain is Protein CYTOKININ-RESPONSIVE GATA TRANSCRIPTION FACTOR 1 from Oryza sativa subsp. japonica (Rice).